Reading from the N-terminus, the 363-residue chain is Phosphoserine aminotransferase (363 aa).

Arginine 42 contacts L-glutamate. Pyridoxal 5'-phosphate-binding positions include 76 to 77, tryptophan 102, threonine 156, aspartate 175, and glutamine 198; that span reads GR. Position 199 is an N6-(pyridoxal phosphate)lysine (lysine 199). 240 to 241 provides a ligand contact to pyridoxal 5'-phosphate; sequence NT.

The protein belongs to the class-V pyridoxal-phosphate-dependent aminotransferase family. SerC subfamily. In terms of assembly, homodimer. The cofactor is pyridoxal 5'-phosphate.

It is found in the cytoplasm. The enzyme catalyses O-phospho-L-serine + 2-oxoglutarate = 3-phosphooxypyruvate + L-glutamate. The catalysed reaction is 4-(phosphooxy)-L-threonine + 2-oxoglutarate = (R)-3-hydroxy-2-oxo-4-phosphooxybutanoate + L-glutamate. It functions in the pathway amino-acid biosynthesis; L-serine biosynthesis; L-serine from 3-phospho-D-glycerate: step 2/3. Its pathway is cofactor biosynthesis; pyridoxine 5'-phosphate biosynthesis; pyridoxine 5'-phosphate from D-erythrose 4-phosphate: step 3/5. Its function is as follows. Catalyzes the reversible conversion of 3-phosphohydroxypyruvate to phosphoserine and of 3-hydroxy-2-oxo-4-phosphonooxybutanoate to phosphohydroxythreonine. The protein is Phosphoserine aminotransferase of Shewanella sp. (strain W3-18-1).